The chain runs to 250 residues: ATP synthase subunit a (250 aa).

Helical transmembrane passes span 27-47 (FTNAALFMFGIVAIIFFFLTF), 85-105 (FFPLVFSLFTFVLVSNVVGLI), 115-135 (LIVTAAMALLVIGTVIVYGFV), 141-161 (FLHLFVPSGVPAFLLPFLVVI), 181-201 (MLAGHIALKVFAFFVVGLASA), and 223-243 (ELLVAMLQAYVFAVLTSIYLN).

The protein belongs to the ATPase A chain family. As to quaternary structure, F-type ATPases have 2 components, CF(1) - the catalytic core - and CF(0) - the membrane proton channel. CF(1) has five subunits: alpha(3), beta(3), gamma(1), delta(1), epsilon(1). CF(0) has three main subunits: a(1), b(2) and c(9-12). The alpha and beta chains form an alternating ring which encloses part of the gamma chain. CF(1) is attached to CF(0) by a central stalk formed by the gamma and epsilon chains, while a peripheral stalk is formed by the delta and b chains.

The protein resides in the cell inner membrane. In terms of biological role, key component of the proton channel; it plays a direct role in the translocation of protons across the membrane. This is ATP synthase subunit a from Xanthobacter autotrophicus (strain ATCC BAA-1158 / Py2).